Reading from the N-terminus, the 290-residue chain is Ribosomal RNA small subunit methyltransferase A (290 aa).

6 residues coordinate S-adenosyl-L-methionine: asparagine 27, leucine 29, glycine 54, glutamate 75, aspartate 100, and asparagine 125.

The protein belongs to the class I-like SAM-binding methyltransferase superfamily. rRNA adenine N(6)-methyltransferase family. RsmA subfamily.

Its subcellular location is the cytoplasm. It carries out the reaction adenosine(1518)/adenosine(1519) in 16S rRNA + 4 S-adenosyl-L-methionine = N(6)-dimethyladenosine(1518)/N(6)-dimethyladenosine(1519) in 16S rRNA + 4 S-adenosyl-L-homocysteine + 4 H(+). Specifically dimethylates two adjacent adenosines (A1518 and A1519) in the loop of a conserved hairpin near the 3'-end of 16S rRNA in the 30S particle. May play a critical role in biogenesis of 30S subunits. The protein is Ribosomal RNA small subunit methyltransferase A of Streptococcus thermophilus (strain CNRZ 1066).